The chain runs to 185 residues: Ribosome-recycling factor (185 aa).

Belongs to the RRF family.

Its subcellular location is the cytoplasm. Responsible for the release of ribosomes from messenger RNA at the termination of protein biosynthesis. May increase the efficiency of translation by recycling ribosomes from one round of translation to another. In Chloroflexus aggregans (strain MD-66 / DSM 9485), this protein is Ribosome-recycling factor.